The primary structure comprises 488 residues: N-succinylglutamate 5-semialdehyde dehydrogenase (488 aa).

An NAD(+)-binding site is contributed by 221–226 (GSSRTG). Residues Glu-244 and Cys-278 contribute to the active site.

The protein belongs to the aldehyde dehydrogenase family. AstD subfamily.

It catalyses the reaction N-succinyl-L-glutamate 5-semialdehyde + NAD(+) + H2O = N-succinyl-L-glutamate + NADH + 2 H(+). Its pathway is amino-acid degradation; L-arginine degradation via AST pathway; L-glutamate and succinate from L-arginine: step 4/5. In terms of biological role, catalyzes the NAD-dependent reduction of succinylglutamate semialdehyde into succinylglutamate. The protein is N-succinylglutamate 5-semialdehyde dehydrogenase of Pseudomonas fluorescens (strain Pf0-1).